Consider the following 235-residue polypeptide: Ubiquinone/menaquinone biosynthesis C-methyltransferase UbiE (235 aa).

Residues T60, D80, 106 to 107 (DV), and S123 each bind S-adenosyl-L-methionine.

This sequence belongs to the class I-like SAM-binding methyltransferase superfamily. MenG/UbiE family.

It catalyses the reaction a 2-demethylmenaquinol + S-adenosyl-L-methionine = a menaquinol + S-adenosyl-L-homocysteine + H(+). The enzyme catalyses a 2-methoxy-6-(all-trans-polyprenyl)benzene-1,4-diol + S-adenosyl-L-methionine = a 5-methoxy-2-methyl-3-(all-trans-polyprenyl)benzene-1,4-diol + S-adenosyl-L-homocysteine + H(+). The protein operates within quinol/quinone metabolism; menaquinone biosynthesis; menaquinol from 1,4-dihydroxy-2-naphthoate: step 2/2. It participates in cofactor biosynthesis; ubiquinone biosynthesis. In terms of biological role, methyltransferase required for the conversion of demethylmenaquinol (DMKH2) to menaquinol (MKH2) and the conversion of 2-polyprenyl-6-methoxy-1,4-benzoquinol (DDMQH2) to 2-polyprenyl-3-methyl-6-methoxy-1,4-benzoquinol (DMQH2). This Bdellovibrio bacteriovorus (strain ATCC 15356 / DSM 50701 / NCIMB 9529 / HD100) protein is Ubiquinone/menaquinone biosynthesis C-methyltransferase UbiE.